The following is a 474-amino-acid chain: tRNA-2-methylthio-N(6)-dimethylallyladenosine synthase (474 aa).

One can recognise an MTTase N-terminal domain in the interval 3–120 (KKLLIKTWGC…LPEMIRQSQS (118 aa)). [4Fe-4S] cluster-binding residues include C12, C49, C83, C157, C161, and C164. The Radical SAM core domain maps to 143-375 (KAEGATAFVS…QQQVNSQAMR (233 aa)). Residues 378 to 441 (RLMLDTEQRV…ANSLRGELVR (64 aa)) form the TRAM domain.

The protein belongs to the methylthiotransferase family. MiaB subfamily. In terms of assembly, monomer. [4Fe-4S] cluster is required as a cofactor.

The protein resides in the cytoplasm. It carries out the reaction N(6)-dimethylallyladenosine(37) in tRNA + (sulfur carrier)-SH + AH2 + 2 S-adenosyl-L-methionine = 2-methylsulfanyl-N(6)-dimethylallyladenosine(37) in tRNA + (sulfur carrier)-H + 5'-deoxyadenosine + L-methionine + A + S-adenosyl-L-homocysteine + 2 H(+). Catalyzes the methylthiolation of N6-(dimethylallyl)adenosine (i(6)A), leading to the formation of 2-methylthio-N6-(dimethylallyl)adenosine (ms(2)i(6)A) at position 37 in tRNAs that read codons beginning with uridine. This Aliivibrio fischeri (strain ATCC 700601 / ES114) (Vibrio fischeri) protein is tRNA-2-methylthio-N(6)-dimethylallyladenosine synthase.